A 142-amino-acid chain; its full sequence is Large ribosomal subunit protein uL13 (142 aa).

This sequence belongs to the universal ribosomal protein uL13 family. Part of the 50S ribosomal subunit.

This protein is one of the early assembly proteins of the 50S ribosomal subunit, although it is not seen to bind rRNA by itself. It is important during the early stages of 50S assembly. This Pasteurella multocida (strain Pm70) protein is Large ribosomal subunit protein uL13.